Here is a 194-residue protein sequence, read N- to C-terminus: Protein GrpE (194 aa).

Residues 1 to 39 (MTNHEQDQQDNSELLDDDQVTLESQQAADSGAEAPASDD) form a disordered region. Positions 8–20 (QQDNSELLDDDQV) are enriched in acidic residues.

It belongs to the GrpE family. Homodimer.

It is found in the cytoplasm. Its function is as follows. Participates actively in the response to hyperosmotic and heat shock by preventing the aggregation of stress-denatured proteins, in association with DnaK and GrpE. It is the nucleotide exchange factor for DnaK and may function as a thermosensor. Unfolded proteins bind initially to DnaJ; upon interaction with the DnaJ-bound protein, DnaK hydrolyzes its bound ATP, resulting in the formation of a stable complex. GrpE releases ADP from DnaK; ATP binding to DnaK triggers the release of the substrate protein, thus completing the reaction cycle. Several rounds of ATP-dependent interactions between DnaJ, DnaK and GrpE are required for fully efficient folding. The sequence is that of Protein GrpE from Saccharophagus degradans (strain 2-40 / ATCC 43961 / DSM 17024).